Here is a 216-residue protein sequence, read N- to C-terminus: Ribosomal RNA small subunit methyltransferase G (216 aa).

S-adenosyl-L-methionine-binding positions include glycine 82, leucine 87, 135-136 (AE), and arginine 148.

Belongs to the methyltransferase superfamily. RNA methyltransferase RsmG family.

It localises to the cytoplasm. The enzyme catalyses guanosine(527) in 16S rRNA + S-adenosyl-L-methionine = N(7)-methylguanosine(527) in 16S rRNA + S-adenosyl-L-homocysteine. In terms of biological role, specifically methylates the N7 position of guanine in position 527 of 16S rRNA. This is Ribosomal RNA small subunit methyltransferase G from Caulobacter vibrioides (strain ATCC 19089 / CIP 103742 / CB 15) (Caulobacter crescentus).